Reading from the N-terminus, the 92-residue chain is Cell division topological specificity factor (92 aa).

It belongs to the MinE family.

Its function is as follows. Prevents the cell division inhibition by proteins MinC and MinD at internal division sites while permitting inhibition at polar sites. This ensures cell division at the proper site by restricting the formation of a division septum at the midpoint of the long axis of the cell. This chain is Cell division topological specificity factor, found in Syntrophobacter fumaroxidans (strain DSM 10017 / MPOB).